A 251-amino-acid chain; its full sequence is Probable transcriptional regulatory protein cgR_1708 (251 aa).

A disordered region spans residues 1-22; sequence MAGHSKWATTKHKKAANDAKRG.

It belongs to the TACO1 family.

It is found in the cytoplasm. The polypeptide is Probable transcriptional regulatory protein cgR_1708 (Corynebacterium glutamicum (strain R)).